A 474-amino-acid chain; its full sequence is Equilibrative nucleoside transporter 3 (474 aa).

Residues 1 to 53 (MAIISEDDFRHTSNSTYRTASSSLRADQEALLEKLLDRPPPSLQRPEDRFNGT) are Cytoplasmic-facing. Residues Ser-21 and Ser-23 each carry the phosphoserine modification. The Dileucine internalization motif signature appears at 31 to 32 (LL). A helical transmembrane segment spans residues 54-74 (YIIFFSLGIGGLLPWNFFVTA). Residues 75-105 (QEYWIFKLSNCSSPAAGEEPKDSDILNYFES) are Extracellular-facing. An N-linked (GlcNAc...) asparagine glycan is attached at Asn-84. A helical membrane pass occupies residues 106 to 126 (YLAVASTVPSVLCLALNFLLV). Residues 127-134 (NRVPIRVR) lie on the Cytoplasmic side of the membrane. The chain crosses the membrane as a helical span at residues 135–155 (VLASLTVMLAIFIVMTVLVKV). The Extracellular portion of the chain corresponds to 156–161 (DTSSWT). Residues 162 to 182 (HSFFTITITCMAILSGTSTIF) form a helical membrane-spanning segment. Residues 183-201 (NSSVFGMTGSFPMRNSQAL) lie on the Cytoplasmic side of the membrane. Residues 202-222 (ISGGAMGGTLSAVASLVDLAV) form a helical membrane-spanning segment. Residues 223–230 (ASDVTDST) are Extracellular-facing. The chain crosses the membrane as a helical span at residues 231–251 (LAFFLTADIFLALCIGLYLLL). At 252–305 (PRLDYARYYMKPVWPTVFSGEEQLPQDSPSPTSVAPGSSDPQTPPLGPILKKTT) the chain is on the cytoplasmic side. Residues 272–294 (EEQLPQDSPSPTSVAPGSSDPQT) are disordered. The span at 276-292 (PQDSPSPTSVAPGSSDP) shows a compositional bias: polar residues. Residues 306–326 (GLGFCIIYLFFITSLIFPAIC) form a helical membrane-spanning segment. The Extracellular segment spans residues 327–339 (TNIESLSKGSGSP). Residues 340 to 357 (WSTKFFVPLTTFLLYNFA) traverse the membrane as a helical segment. Residues 358–376 (DLCGRQVTAWIQVPGPRSK) are Cytoplasmic-facing. Residues 377 to 397 (ALPGLALLRTCFVPLFVFCNY) traverse the membrane as a helical segment. Residues 398–414 (QPRGHLHTVLFQSDVYP) lie on the Extracellular side of the membrane. A helical transmembrane segment spans residues 415–435 (VLFTSLLGLSNGYLSTLALIY). Residues 436-453 (GPKIVPRELAEATGVVMT) lie on the Cytoplasmic side of the membrane. The helical transmembrane segment at 454 to 474 (FYMGLGLVLGSACSALLVHLI) threads the bilayer.

The protein belongs to the SLC29A/ENT transporter (TC 2.A.57) family.

Its subcellular location is the lysosome membrane. The protein localises to the late endosome membrane. It is found in the mitochondrion membrane. The protein resides in the cell membrane. The catalysed reaction is adenosine(in) = adenosine(out). The enzyme catalyses guanosine(in) = guanosine(out). It carries out the reaction inosine(in) = inosine(out). It catalyses the reaction uridine(out) = uridine(in). The catalysed reaction is cytidine(in) = cytidine(out). The enzyme catalyses thymidine(in) = thymidine(out). It carries out the reaction 2'-deoxyadenosine(in) = 2'-deoxyadenosine(out). It catalyses the reaction 2'-deoxycytidine(in) = 2'-deoxycytidine(out). The catalysed reaction is guanine(out) = guanine(in). The enzyme catalyses uracil(in) = uracil(out). It carries out the reaction (R)-noradrenaline(out) = (R)-noradrenaline(in). It catalyses the reaction dopamine(out) = dopamine(in). The catalysed reaction is serotonin(out) = serotonin(in). The enzyme catalyses tyramine(in) = tyramine(out). It carries out the reaction ATP(in) = ATP(out). Its function is as follows. Uniporter that mediates the facilitative transport of nucleoside across lysosomal and mitochondrial membranes. Functions as a non-electrogenic Na(+)-independent transporter. Substrate transport is pH-dependent and enhanced under acidic condition, probably reflecting the location of the transporter in acidic intracellular compartments. Proton is not a cotransporting ion but most likely change the ionization state of the transporter which dictates transport-permissible/impermissible conformation for nucleoside translocation. May direct the nucleoside transport from lysosomes to cytosol or cytosol to mitochondria to facilitate the fundamental function of salvage synthesis of nucleic acids. Involved in the transport of nucleosides (adenosine, guanosine, uridine, thymidine, cytidine and inosine) and deoxynucleosides (deoxyadenosine, deoxycytidine). Also mediates transport of purine nucleobases (adenine, guanine) and pyrimidine nucleobases (uracil). Also able to transport monoamine neurotransmitters dopamine, serotonin, noradrenaline and tyramine. Capable of transporting ATP. Mediates nucleoside export from lysosomes in macrophages, which regulates macrophage functions and numbers. The protein is Equilibrative nucleoside transporter 3 (SLC29A3) of Bos taurus (Bovine).